The following is a 417-amino-acid chain: Serine hydroxymethyltransferase (417 aa).

Residues Leu120 and 124–126 (GHL) each bind (6S)-5,6,7,8-tetrahydrofolate. At Lys229 the chain carries N6-(pyridoxal phosphate)lysine.

The protein belongs to the SHMT family. In terms of assembly, homodimer. Pyridoxal 5'-phosphate is required as a cofactor.

The protein resides in the cytoplasm. The catalysed reaction is (6R)-5,10-methylene-5,6,7,8-tetrahydrofolate + glycine + H2O = (6S)-5,6,7,8-tetrahydrofolate + L-serine. Its pathway is one-carbon metabolism; tetrahydrofolate interconversion. It functions in the pathway amino-acid biosynthesis; glycine biosynthesis; glycine from L-serine: step 1/1. Functionally, catalyzes the reversible interconversion of serine and glycine with tetrahydrofolate (THF) serving as the one-carbon carrier. This reaction serves as the major source of one-carbon groups required for the biosynthesis of purines, thymidylate, methionine, and other important biomolecules. Also exhibits THF-independent aldolase activity toward beta-hydroxyamino acids, producing glycine and aldehydes, via a retro-aldol mechanism. This Anaeromyxobacter dehalogenans (strain 2CP-1 / ATCC BAA-258) protein is Serine hydroxymethyltransferase.